The primary structure comprises 128 residues: Protein yippee-like At3g08990 (128 aa).

The Yippee domain occupies 12–109 (LVYSCKYCQT…LERFKVLGPY (98 aa)). Cys16, Cys19, Cys72, and Cys75 together coordinate Zn(2+).

This sequence belongs to the yippee family.

In Arabidopsis thaliana (Mouse-ear cress), this protein is Protein yippee-like At3g08990.